We begin with the raw amino-acid sequence, 187 residues long: UPF0301 protein YqgE (187 aa).

Belongs to the UPF0301 (AlgH) family.

This Salmonella heidelberg (strain SL476) protein is UPF0301 protein YqgE.